The chain runs to 473 residues: MYNKITPPTTGEKITFKNGEPVVPDNPIIPFIRGDGTGIDIWPATEKVLDAAVAKAYQGKRKISWFKVYAGDEACDLYGTYQYLPEDTLTAIREYGVAIKGPLTTPVGGGIRSLNVALRQIFDLYACVRPCRYYAGTPSPHKNPEKLDVIVYRENTEDIYLGIEWKQGSEIGDRLISILNKELIPATPEHGKKQIPLDSGIGIKPISKTGSQRLVRRAIKHALTLPKDKQQVTLVHKGNIMKYTEGAFRDWGYELATSEFRQETVTERESWILSNKEKNPNISLEDNARQIDPGFDALTPEKKAQIVKEVETVLNSIWESHGNGKWKEKVLVNDRIADSIFQQIQTRPDEYSILATMNLNGDYLSDAAAAIVGGLGMGPGANIGDSCAVFEATHGTAPKHAGLDRINPGSVILSGVMMLEYMGWQEAADLIKKGLSDAIANSQVTYDLARLLEPPVEPLKCSEFADAIIKHFG.

Residue threonine 104 coordinates NADP(+). D-threo-isocitrate-binding residues include serine 113, asparagine 115, arginine 119, arginine 129, and arginine 153. Aspartate 362 is a binding site for Mg(2+). Residues 394 to 400, asparagine 407, tyrosine 446, and arginine 450 each bind NADP(+); that span reads HGTAPKH.

Belongs to the isocitrate and isopropylmalate dehydrogenases family. Homodimer. Requires Mg(2+) as cofactor. The cofactor is Mn(2+).

It carries out the reaction D-threo-isocitrate + NADP(+) = 2-oxoglutarate + CO2 + NADPH. With respect to regulation, inhibited by either oxaloacetate or glyoxylate. Also inhibited by the adenine nucleotides AMP, ADP and ATP and by NADPH, which inhibits the activity by 28% when it is added to the assay mixture at 0.25 mM. Functionally, catalyzes the oxidative decarboxylation of isocitrate to 2-oxoglutarate and carbon dioxide with the concomitant reduction of NADP(+). This is Isocitrate dehydrogenase [NADP] from Nostoc sp. (strain PCC 7120 / SAG 25.82 / UTEX 2576).